Reading from the N-terminus, the 149-residue chain is Transcriptional repressor NrdR (149 aa).

The segment at 3 to 34 is a zinc-finger region; the sequence is CPFCSATDTKVIDSRLVADGHQVRRRRECVQC. An ATP-cone domain is found at 49-139; sequence PRVVKQDGSR…VYRAFEDVSE (91 aa).

The protein belongs to the NrdR family. Requires Zn(2+) as cofactor.

Its function is as follows. Negatively regulates transcription of bacterial ribonucleotide reductase nrd genes and operons by binding to NrdR-boxes. This is Transcriptional repressor NrdR from Shewanella pealeana (strain ATCC 700345 / ANG-SQ1).